The primary structure comprises 501 residues: Aldehyde dehydrogenase 1A1 (501 aa).

Ser2 is subject to N-acetylserine. N6-acetyllysine is present on residues Lys91 and Lys128. NAD(+) is bound by residues 167 to 170 (IPWN), 193 to 196 (KPAE), 226 to 227 (GP), and 246 to 247 (GS). Position 252 is an N6-acetyllysine (Lys252). Glu269 acts as the Proton acceptor in catalysis. Position 269–271 (269–271 (ELG)) interacts with NAD(+). The Nucleophile role is filled by Cys303. Residues 336-501 (LTPGVSQGPQ…VTIKISQKNS (166 aa)) are mediates interaction with PRMT3. At Thr337 the chain carries Phosphothreonine. An NAD(+)-binding site is contributed by 349-353 (EQYEK). N6-acetyllysine is present on residues Lys353 and Lys367. 400–402 (EIF) is a binding site for NAD(+). N6-acetyllysine is present on Lys410. Ser413 carries the phosphoserine modification. An N6-acetyllysine mark is found at Lys419 and Lys495.

Belongs to the aldehyde dehydrogenase family. In terms of assembly, homotetramer. Interacts with PRMT3; the interaction is direct, inhibits ALDH1A1 aldehyde dehydrogenase activity and is independent of the methyltransferase activity of PRMT3. In terms of processing, the N-terminus is blocked most probably by acetylation. As to expression, expressed in muscle, liver, small intestine, kidney, brain, lung, heart but not detected in erythrocytes (at protein level).

Its subcellular location is the cytoplasm. It localises to the cytosol. The protein resides in the cell projection. It is found in the axon. The catalysed reaction is an aldehyde + NAD(+) + H2O = a carboxylate + NADH + 2 H(+). The enzyme catalyses all-trans-retinal + NAD(+) + H2O = all-trans-retinoate + NADH + 2 H(+). It carries out the reaction 9-cis-retinal + NAD(+) + H2O = 9-cis-retinoate + NADH + 2 H(+). It catalyses the reaction 11-cis-retinal + NAD(+) + H2O = 11-cis-retinoate + NADH + 2 H(+). The catalysed reaction is 13-cis-retinal + NAD(+) + H2O = 13-cis-retinoate + NADH + 2 H(+). The enzyme catalyses 3-deoxyglucosone + NAD(+) + H2O = 2-dehydro-3-deoxy-D-gluconate + NADH + 2 H(+). It carries out the reaction (E)-4-hydroxynon-2-enal + NAD(+) + H2O = (E)-4-hydroxynon-2-enoate + NADH + 2 H(+). It catalyses the reaction malonaldehyde + NAD(+) + H2O = 3-oxopropanoate + NADH + 2 H(+). The catalysed reaction is hexanal + NAD(+) + H2O = hexanoate + NADH + 2 H(+). The enzyme catalyses propanal + NAD(+) + H2O = propanoate + NADH + 2 H(+). It carries out the reaction acetaldehyde + NAD(+) + H2O = acetate + NADH + 2 H(+). It catalyses the reaction benzaldehyde + NAD(+) + H2O = benzoate + NADH + 2 H(+). The catalysed reaction is 4-aminobutanal + NAD(+) + H2O = 4-aminobutanoate + NADH + 2 H(+). The protein operates within cofactor metabolism; retinol metabolism. Its function is as follows. Cytosolic dehydrogenase that catalyzes the irreversible oxidation of a wide range of aldehydes to their corresponding carboxylic acid. Functions downstream of retinol dehydrogenases and catalyzes the oxidation of retinaldehyde into retinoic acid, the second step in the oxidation of retinol/vitamin A into retinoic acid. This pathway is crucial to control the levels of retinol and retinoic acid, two important molecules which excess can be teratogenic and cytotoxic. Also oxidizes aldehydes resulting from lipid peroxidation like (E)-4-hydroxynon-2-enal/HNE, malonaldehyde and hexanal that form protein adducts and are highly cytotoxic. By participating for instance to the clearance of (E)-4-hydroxynon-2-enal/HNE in the lens epithelium prevents the formation of HNE-protein adducts and lens opacification. Also functions downstream of fructosamine-3-kinase in the fructosamine degradation pathway by catalyzing the oxidation of 3-deoxyglucosone, the carbohydrate product of fructosamine 3-phosphate decomposition, which is itself a potent glycating agent that may react with lysine and arginine side-chains of proteins. Also has an aminobutyraldehyde dehydrogenase activity and is probably part of an alternative pathway for the biosynthesis of GABA/4-aminobutanoate in midbrain, thereby playing a role in GABAergic synaptic transmission. This chain is Aldehyde dehydrogenase 1A1, found in Bos taurus (Bovine).